The chain runs to 275 residues: ATP synthase subunit delta (275 aa).

Belongs to the ATPase delta chain family. In terms of assembly, F-type ATPases have 2 components, F(1) - the catalytic core - and F(0) - the membrane proton channel. F(1) has five subunits: alpha(3), beta(3), gamma(1), delta(1), epsilon(1). F(0) has three main subunits: a(1), b(2) and c(10-14). The alpha and beta chains form an alternating ring which encloses part of the gamma chain. F(1) is attached to F(0) by a central stalk formed by the gamma and epsilon chains, while a peripheral stalk is formed by the delta and b chains.

Its subcellular location is the cell membrane. Functionally, f(1)F(0) ATP synthase produces ATP from ADP in the presence of a proton or sodium gradient. F-type ATPases consist of two structural domains, F(1) containing the extramembraneous catalytic core and F(0) containing the membrane proton channel, linked together by a central stalk and a peripheral stalk. During catalysis, ATP synthesis in the catalytic domain of F(1) is coupled via a rotary mechanism of the central stalk subunits to proton translocation. This protein is part of the stalk that links CF(0) to CF(1). It either transmits conformational changes from CF(0) to CF(1) or is implicated in proton conduction. The sequence is that of ATP synthase subunit delta from Arthrobacter sp. (strain FB24).